A 90-amino-acid chain; its full sequence is RNA-binding protein Hfq (90 aa).

Residues 9-69 form the Sm domain; it reads DRFLNHLRVN…ISTIIPSSYV (61 aa).

Belongs to the Hfq family. In terms of assembly, homohexamer.

Functionally, RNA chaperone that binds small regulatory RNA (sRNAs) and mRNAs to facilitate mRNA translational regulation in response to envelope stress, environmental stress and changes in metabolite concentrations. Also binds with high specificity to tRNAs. In Thermotoga sp. (strain RQ2), this protein is RNA-binding protein Hfq.